We begin with the raw amino-acid sequence, 166 residues long: Probable dual specificity protein phosphatase H1 homolog (166 aa).

The 142-residue stretch at 25-166 (DITKITDYVY…FLNQIIDKYI (142 aa)) folds into the Tyrosine-protein phosphatase domain. C108 functions as the Phosphocysteine intermediate in the catalytic mechanism.

It belongs to the protein-tyrosine phosphatase family. Non-receptor class dual specificity subfamily. Homodimer.

The protein localises to the virion. It is found in the host cytoplasm. It carries out the reaction O-phospho-L-tyrosyl-[protein] + H2O = L-tyrosyl-[protein] + phosphate. The catalysed reaction is O-phospho-L-seryl-[protein] + H2O = L-seryl-[protein] + phosphate. In terms of biological role, serine/Tyrosine phosphatase which down-regulates cellular antiviral response by dephosphorylating activated STAT1 and blocking interferon (IFN)-stimulated innate immune responses. The sequence is that of Probable dual specificity protein phosphatase H1 homolog from Vertebrata (FPV).